The sequence spans 1161 residues: Nuclear pore complex-interacting protein family member B11 (1161 aa).

The chain crosses the membrane as a helical span at residues 63–87 (IIIAFPTSYKVVITLWIVYLWVSLL). Disordered regions lie at residues 278 to 580 (ADDN…DDNI) and 892 to 1161 (SADD…RRLS). Residues 311 to 321 (PLPPSAPPSAP) are compositionally biased toward pro residues. Basic and acidic residues-rich tracts occupy residues 368–378 (DNIKTTAERLR), 410–420 (DNIKTPAEHLR), 452–462 (DNIKTPAERLR), 494–504 (DNIKTPAEHLR), 536–546 (DNIKTTAEHLR), 918–928 (DNIKTPAERLR), 960–970 (DNIKTPAERLR), 1002–1012 (DNIKTPAERLR), and 1044–1054 (DNIKTPAERLR).

It belongs to the NPIP family.

The protein resides in the membrane. This Homo sapiens (Human) protein is Nuclear pore complex-interacting protein family member B11 (NPIPB11).